A 402-amino-acid polypeptide reads, in one-letter code: Multidrug resistance protein MdtH (402 aa).

The Cytoplasmic segment spans residues 1–12 (MSRVSQARNLGK). Residues 13 to 33 (YFLLIDNMLVVLGFFVVFPLI) form a helical membrane-spanning segment. Residues 34 to 98 (SIRFVDQMGW…GFATMGIAHE (65 aa)) lie on the Periplasmic side of the membrane. Residues 99 to 116 (PWLLWFSCFLSGLGGTLF) form a helical membrane-spanning segment. Residues 117–138 (DPPRSALVVKLIRPEQRGRFFS) are Cytoplasmic-facing. Residues 139-159 (LLMMQDSAGAVIGALLGSWLL) traverse the membrane as a helical segment. Over 160–164 (QYDFR) the chain is Periplasmic. Residues 165–185 (LVCATGAILFILCALFNAWLL) traverse the membrane as a helical segment. Over 186-213 (PAWKLSTVRTPVREGMRRVMSDKRFVTY) the chain is Cytoplasmic. The helical transmembrane segment at 214-234 (VLTLAGYYMLAVQVMLMLPIM) threads the bilayer. Residues 235 to 243 (VNDIAGSPA) lie on the Periplasmic side of the membrane. The chain crosses the membrane as a helical span at residues 244-264 (AVKWMYAIEACLSLTLLYPIA). Residues 265 to 276 (RWSEKRFRLEHR) are Cytoplasmic-facing. A helical membrane pass occupies residues 277–297 (LMAGLLVMSLSMLPIGMVGNL). The Periplasmic portion of the chain corresponds to 298–299 (QQ). Residues 300–320 (LFTLICAFYIGSVIAEPARET) traverse the membrane as a helical segment. Residues 321–339 (LSASLADARARGSYMGFSR) lie on the Cytoplasmic side of the membrane. A helical membrane pass occupies residues 340–360 (LGLAIGGAIGYIGGGWLFDMG). Residues 361–367 (KALAQPE) lie on the Periplasmic side of the membrane. A helical transmembrane segment spans residues 368 to 388 (LPWMMLGIIGFITFLALGWQF). The Cytoplasmic portion of the chain corresponds to 389 to 402 (SHKRTPRRMLEPGA).

Belongs to the major facilitator superfamily. DHA1 family. MdtH (TC 2.A.1.2.21) subfamily.

It is found in the cell inner membrane. This chain is Multidrug resistance protein MdtH, found in Salmonella agona (strain SL483).